The chain runs to 222 residues: V-type ATP synthase subunit D (222 aa).

It belongs to the V-ATPase D subunit family.

Functionally, produces ATP from ADP in the presence of a proton gradient across the membrane. This Acetivibrio thermocellus (strain ATCC 27405 / DSM 1237 / JCM 9322 / NBRC 103400 / NCIMB 10682 / NRRL B-4536 / VPI 7372) (Clostridium thermocellum) protein is V-type ATP synthase subunit D.